A 497-amino-acid chain; its full sequence is COP9 signalosome complex subunit 3 (497 aa).

The region spanning 233–408 (QAFDAFERCV…DGSPAYLTFL (176 aa)) is the PCI domain.

It belongs to the CSN3 family. As to quaternary structure, component of the COP9 signalosome (CSN) complex.

It localises to the cytoplasm. It is found in the nucleus. Component of the COP9 signalosome (CSN) complex that acts as an regulator of the ubiquitin (Ubl) conjugation pathway by mediating the deneddylation of the cullin subunit of SCF-type E3 ubiquitin-protein ligase complexes. The CSN complex is involved in the regulation of the circadian clock through its control of the stability of the SCF(FWD1) complex. This chain is COP9 signalosome complex subunit 3 (csn-3), found in Neurospora crassa (strain ATCC 24698 / 74-OR23-1A / CBS 708.71 / DSM 1257 / FGSC 987).